Here is a 248-residue protein sequence, read N- to C-terminus: Probable transcriptional regulatory protein RHOS4_22610 (248 aa).

The disordered stretch occupies residues 1-21; that stretch reads MAGHSKWANIQHRKGKQDKLR.

This sequence belongs to the TACO1 family.

It localises to the cytoplasm. This is Probable transcriptional regulatory protein RHOS4_22610 from Cereibacter sphaeroides (strain ATCC 17023 / DSM 158 / JCM 6121 / CCUG 31486 / LMG 2827 / NBRC 12203 / NCIMB 8253 / ATH 2.4.1.) (Rhodobacter sphaeroides).